A 247-amino-acid chain; its full sequence is Golgi-associated RAB2 interactor protein 5A (247 aa).

Pro residues predominate over residues 1 to 16 (MGPPLWPDLQEPPPPG). Disordered stretches follow at residues 1–22 (MGPP…SQIR) and 60–92 (GDIA…PTGR).

This sequence belongs to the GARIN family. As to quaternary structure, interacts (via N-terminus) with RAB2B (in GTP-bound form).

Its subcellular location is the golgi apparatus. In terms of biological role, RAB2B effector protein which promotes cytosolic DNA-induced innate immune responses. Regulates IFN responses against DNA viruses by regulating the CGAS-STING signaling axis. This Homo sapiens (Human) protein is Golgi-associated RAB2 interactor protein 5A.